A 101-amino-acid polypeptide reads, in one-letter code: Urease subunit beta (101 aa).

Belongs to the urease beta subunit family. In terms of assembly, heterotrimer of UreA (gamma), UreB (beta) and UreC (alpha) subunits. Three heterotrimers associate to form the active enzyme.

Its subcellular location is the cytoplasm. The enzyme catalyses urea + 2 H2O + H(+) = hydrogencarbonate + 2 NH4(+). Its pathway is nitrogen metabolism; urea degradation; CO(2) and NH(3) from urea (urease route): step 1/1. The protein is Urease subunit beta of Burkholderia ambifaria (strain MC40-6).